Reading from the N-terminus, the 111-residue chain is Iron-sulfur cluster insertion protein ErpA (111 aa).

3 residues coordinate iron-sulfur cluster: Cys-39, Cys-103, and Cys-105.

This sequence belongs to the HesB/IscA family. Homodimer. The cofactor is iron-sulfur cluster.

Required for insertion of 4Fe-4S clusters for at least IspG. This is Iron-sulfur cluster insertion protein ErpA from Acinetobacter baumannii (strain SDF).